A 524-amino-acid chain; its full sequence is Coronin-2A (524 aa).

5 WD repeats span residues 80 to 120 (GHRG…LTRN), 130 to 170 (GHAR…SVIA), 178 to 217 (CHQD…VLQE), 220 to 263 (YKGH…VPLT), and 269 to 308 (GSSG…PHLT). The segment at 403-436 (LLDSQTLPPERPLSNSMVQVSPQPLEPMKQPAED) is disordered. The segment covering 404–424 (LDSQTLPPERPLSNSMVQVSP) has biased composition (polar residues). Positions 484–523 (QMFYRQQEEIRRLRELLIQREVQTKQLELEIKNLRMALGQ) form a coiled coil.

It belongs to the WD repeat coronin family. Binds actin. Component of the N-Cor repressor complex, at least composed of NCOR1, NCOR2, HDAC3, TBL1X, TBL1R, CORO2A and GPS2.

The protein is Coronin-2A (Coro2a) of Mus musculus (Mouse).